A 702-amino-acid chain; its full sequence is MADS-box MEF2 type transcription factor MIG1 (702 aa).

The 61-residue stretch at 1 to 61 folds into the MADS-box domain; it reads MGRRKIEIKA…KKLYEYSSGD (61 aa). 2 disordered regions span residues 73 to 608 and 658 to 702; these read GGAT…NIDT and PSFL…KVDS. Acidic residues predominate over residues 86 to 96; the sequence is GGDDDDEEEGD. The span at 132-144 shows a compositional bias: pro residues; sequence ASPPIPNGVPFPP. Over residues 145-155 the composition is skewed to low complexity; the sequence is HGHGVPRGHTP. A compositionally biased stretch (polar residues) spans 180–195; the sequence is GSPQVNGFGFGQQQSM. Over residues 201–241 the composition is skewed to pro residues; the sequence is TTMPPHMPPQMAPGPPFPYPQHPQHPPHPPHPPHPPHPQQP. Low complexity-rich tracts occupy residues 273-284, 326-343, and 350-371; these read PMGMQRHSVSPP, ESPQ…QQPE, and EQQQ…QSEP. Polar residues predominate over residues 456–465; sequence VDESTSNASE. Low complexity-rich tracts occupy residues 487-512 and 530-553; these read RASI…SLRA and DGSG…DATS. A compositionally biased stretch (polar residues) spans 554-567; sequence QSTRQNDSHSSTNM. A compositionally biased stretch (pro residues) spans 587–600; that stretch reads PPNPFAPKRPPQHP. Basic and acidic residues predominate over residues 693–702; sequence NEPKRVKVDS.

Belongs to the MEF2 family. Interacts with MAPK MPS1.

The protein localises to the nucleus. Functionally, transcription factor acting downstream of the MPS1 MAP kinase (MAPK) cascade during conidiation and plant infection. Required for overcoming plant defense responses and the differentiation of secondary infectious hyphae in live plant cells. This chain is MADS-box MEF2 type transcription factor MIG1, found in Pyricularia oryzae (Rice blast fungus).